The chain runs to 238 residues: Flagellar L-ring protein (238 aa).

The first 16 residues, 1 to 16 (MNKAILAVAMVLLLAG), serve as a signal peptide directing secretion. Residue Cys-17 is the site of N-palmitoyl cysteine attachment. Cys-17 carries S-diacylglycerol cysteine lipidation.

The protein belongs to the FlgH family. In terms of assembly, the basal body constitutes a major portion of the flagellar organelle and consists of four rings (L,P,S, and M) mounted on a central rod.

The protein localises to the cell outer membrane. Its subcellular location is the bacterial flagellum basal body. Assembles around the rod to form the L-ring and probably protects the motor/basal body from shearing forces during rotation. In Brucella canis (strain ATCC 23365 / NCTC 10854 / RM-666), this protein is Flagellar L-ring protein.